The chain runs to 151 residues: Acidic phospholipase A2 1 (151 aa).

The N-terminal stretch at 1 to 21 is a signal peptide; it reads MNPAHLLVLSAVCVSLLGASS. Residues 22-27 constitute a propeptide that is removed on maturation; sequence IPPQPL. 7 disulfides stabilise this stretch: Cys-38–Cys-104, Cys-54–Cys-151, Cys-56–Cys-72, Cys-71–Cys-132, Cys-78–Cys-125, Cys-88–Cys-118, and Cys-111–Cys-123. 3 residues coordinate Ca(2+): Tyr-55, Gly-57, and Gly-59. His-75 is an active-site residue. Asp-76 lines the Ca(2+) pocket. Asp-126 is an active-site residue.

Ca(2+) serves as cofactor. In terms of tissue distribution, expressed by the venom gland.

The protein resides in the secreted. The catalysed reaction is a 1,2-diacyl-sn-glycero-3-phosphocholine + H2O = a 1-acyl-sn-glycero-3-phosphocholine + a fatty acid + H(+). Snake venom phospholipase A2 (PLA2) that may exhibit cardiotoxicity, myotoxicity, antiplatelet activity, and edema-inducing activity. PLA2 catalyzes the calcium-dependent hydrolysis of the 2-acyl groups in 3-sn-phosphoglycerides. The sequence is that of Acidic phospholipase A2 1 from Ophiophagus hannah (King cobra).